Reading from the N-terminus, the 91-residue chain is ATP synthase subunit c (91 aa).

Helical transmembrane passes span 4-24 (LTMCMLAAGFGMAIGAFGTGI) and 53-73 (IGLAMIESLAIYVLVVCLIIL).

It belongs to the ATPase C chain family. As to quaternary structure, F-type ATPases have 2 components, F(1) - the catalytic core - and F(0) - the membrane proton channel. F(1) has five subunits: alpha(3), beta(3), gamma(1), delta(1), epsilon(1). F(0) has three main subunits: a(1), b(2) and c(10-14). The alpha and beta chains form an alternating ring which encloses part of the gamma chain. F(1) is attached to F(0) by a central stalk formed by the gamma and epsilon chains, while a peripheral stalk is formed by the delta and b chains.

The protein localises to the cell inner membrane. F(1)F(0) ATP synthase produces ATP from ADP in the presence of a proton or sodium gradient. F-type ATPases consist of two structural domains, F(1) containing the extramembraneous catalytic core and F(0) containing the membrane proton channel, linked together by a central stalk and a peripheral stalk. During catalysis, ATP synthesis in the catalytic domain of F(1) is coupled via a rotary mechanism of the central stalk subunits to proton translocation. In terms of biological role, key component of the F(0) channel; it plays a direct role in translocation across the membrane. A homomeric c-ring of between 10-14 subunits forms the central stalk rotor element with the F(1) delta and epsilon subunits. In Geobacter metallireducens (strain ATCC 53774 / DSM 7210 / GS-15), this protein is ATP synthase subunit c.